Reading from the N-terminus, the 225-residue chain is UPF0758 protein Sbal223_0402 (225 aa).

One can recognise an MPN domain in the interval 102 to 224 (VLTNPDLTRD…IVSFAERGWI (123 aa)). Residues His173, His175, and Asp186 each coordinate Zn(2+). The JAMM motif motif lies at 173–186 (HNHPSGIAEPSQAD).

Belongs to the UPF0758 family.

In Shewanella baltica (strain OS223), this protein is UPF0758 protein Sbal223_0402.